The primary structure comprises 1107 residues: MIIFVSEEPERRLAIVSNLYALVLKPVGKKPSDKPLCAIELLQKNDLKKYGFKRLTSHEIFGVIGLIEVNGLLFVGAITGKSKVAQPCPGETVNKIFAVDFFCLNDNSWDFIEIDSSGYPVLPETASTEYQDALPKHPCYELKKLLSNGSFYYSSDFDLTSTLQHRGYGQHSLSTDTYEEEYMWNSFLMQEMITYRDHLDTNLKQILDDEGFLTTVIRGFAETFVSYVKKLKVALTIISKQSWKRAGTRFNARGVDDEANVANFVETEFIMYSSQYCYAFTQIRGSIPVFWEQGTSLINPRVQITRSFEATQPVFDKHIMKSVEKYGPVHVVNLLSTKSSEIELSKRYKEHLTHSKKLNFNKDIFLTEFDFHKETSQEGFSGVRKLIPLILDSLLSSGYYSYDVREKKNISEQHGIFRTNCLDCLDRTNLAQQIISLAAFRTFLEDFRLISSNSFIDDDDFVSKHNTLWADHGDQISQIYTGTNALKSSFSRKGKMSLAGALSDATKSVSRIYINNFMDKEKQQNIDTLLGRLPYQKAVQLYDPVNEYVSTKLQSMSDKFTSTSNINLLIGSFNVNGATKKVDLSKWLFPIGEKFKPDIVVLGLQEVIELSAGSILNADYSKSSFWENLVGDCLNQYDDKYLLLRVEQMTSLLILFFVKADKAKYVKQVEGATKKTGFRGMAGNKGAVSIRFEYGATSFCFVNSHLAAGATNVEERRSDYESIVRGITFTRTKMIPHHDSIFWLGDMNYRINLPNEDVRRELLNQEEGYIDKLLHFDQLTLGINSGSVFEGFKEPTLKFRPTYKYDPGTGTYDSSEKERTPSWTDRIIYKGENLLPLSYSDAPIMISDHRPVYAAYRAKITFVDDKERLSLKKRLFTEYKQEHPEEPGSLISDLLSLDLDNKSTDGFKSSSESSLLDIDPIMAQPTASSVASSSPVSSASASLQPVRTQNSSQSRTPIKKPVLRPPPPPAHKSVSAPAPSTSKEKSPTPQTSTASLSSVTKNIQENKPLAQNRRIPPPGFSQNILTPKSTSNLASPMSSKVDLYNSASESTRSAQDARQQTPTAFAASRDVNGQPEALLGDENPIEPEEKAKLNHMTLDSWQPLTPK.

Residues 142 to 482 enclose the SAC domain; sequence LKKLLSNGSF…GDQISQIYTG (341 aa). Position 497 is a phosphoserine (S497). Residues 926 to 1107 form a disordered region; sequence TASSVASSSP…LDSWQPLTPK (182 aa). Positions 927–942 are enriched in low complexity; that stretch reads ASSVASSSPVSSASAS. A compositionally biased stretch (polar residues) spans 943–956; that stretch reads LQPVRTQNSSQSRT. S986 carries the phosphoserine modification. Composition is skewed to polar residues over residues 987 to 1005, 1020 to 1038, 1045 to 1063, and 1097 to 1107; these read PTPQ…NIQE, FSQN…SPMS, NSAS…QTPT, and TLDSWQPLTPK. A Phosphoserine modification is found at S1035. T1105 carries the post-translational modification Phosphothreonine.

Belongs to the synaptojanin family. It in the central section; belongs to the inositol 1,4,5-trisphosphate 5-phosphatase family. As to quaternary structure, interacts (via SAC domain) with BSP1; the interaction is direct. Interacts with CHC1.

The protein resides in the cytoplasm. It carries out the reaction a 1,2-diacyl-sn-glycero-3-phospho-(1D-myo-inositol-4,5-bisphosphate) + H2O = a 1,2-diacyl-sn-glycero-3-phospho-(1D-myo-inositol 4-phosphate) + phosphate. Functionally, dephosphorylates a number of phosphatidylinositols (PIs) like phosphatidylinositol 4,5-bisphosphate (PtdIns(4,5)P2), but also phosphatidylinositol 3-phosphate (PtdIns(3)P), phosphatidylinositol 4-phosphate (PtdIns(4)P), and phosphatidylinositol 3,5-bisphosphate (PtdIns(3,5)P2). Controls the cellular levels and subcellular distribution of phosphatidylinositol 3-phosphate and phosphatidylinositol 4,5-bisphosphate. Plays an essential role in a TGN (trans Golgi network)-to-early endosome pathway. Involved in clathrin-mediated protein sorting at the TGN. The protein is Polyphosphatidylinositol phosphatase INP53 (INP53) of Saccharomyces cerevisiae (strain ATCC 204508 / S288c) (Baker's yeast).